A 1140-amino-acid polypeptide reads, in one-letter code: Rho GTPase-activating protein gacF (1140 aa).

8 disordered regions span residues 1 to 145, 189 to 236, 455 to 504, 520 to 644, 661 to 700, 720 to 759, 773 to 927, and 952 to 1095; these read MKTH…KPSR, ESDI…IEPI, INNN…STSF, EVQQ…GLES, ESSKLPKKSSLNRQMTIVNSNNIGNGDEKNSDCTTSDEDE, ETNDDNNNNDQINNSNSSNNIPKTTITTTTNNTTTTNNIS, AKVT…STLS, and TSSP…NHTN. Composition is skewed to low complexity over residues 10 to 26 and 35 to 71; these read LGGLFSHSSSSPNLKSF and QQQQQQQHNNNNNNNNNHQRQPSTTSTSSYIDSASSS. Residues 28–55 adopt a coiled-coil conformation; that stretch reads TEEVIHEQQQQQQQHNNNNNNNNNHQRQ. The span at 72-82 shows a compositional bias: polar residues; the sequence is IEETSGYLSKT. Composition is skewed to low complexity over residues 83–136 and 193–222; these read SSSS…TSSP and DNGSSGGTTSSTGNIISHSKSPSSSSSSSS. The Rho-GAP domain occupies 234–409; the sequence is EPISQSTEDY…RLIENYHSIF (176 aa). 2 stretches are compositionally biased toward low complexity: residues 456–475 and 482–493; these read NNNSNSSNNNNSSSSSSPYK and PKSSPKLNNRNS. Over residues 494–504 the composition is skewed to polar residues; it reads ISPKLSSSTSF. Positions 517 to 548 form a coiled coil; that stretch reads ISDEVQQEQQNQQQQQDEQQDEQQDEQQDEQQ. A compositionally biased stretch (low complexity) spans 520 to 533; the sequence is EVQQEQQNQQQQQD. Residues 534–549 are compositionally biased toward acidic residues; that stretch reads EQQDEQQDEQQDEQQD. Residues 550-566 are compositionally biased toward low complexity; the sequence is EQNSNSTSINTSSSSIT. Positions 572–596 are enriched in polar residues; that stretch reads STVQYLNRINTCRRPSSWTNNNRIK. The span at 597–606 shows a compositional bias: basic residues; sequence QQQHHHHHHQ. The segment covering 607-631 has biased composition (low complexity); sequence QQQQHQQHQQQQSSSSESNSSLTSS. 2 stretches are compositionally biased toward polar residues: residues 632–641 and 672–684; these read PQKRLNSVNG and NRQMTIVNSNNIG. A compositionally biased stretch (low complexity) spans 724-759; sequence DNNNNDQINNSNSSNNIPKTTITTTTNNTTTTNNIS. Positions 773-796 are enriched in polar residues; sequence AKVTPTPTPAPMQTSSFLSTKQTN. The segment covering 797-822 has biased composition (low complexity); it reads SPSSSSSPSSTVSSTSSSPSSSLSSS. Residues 823–854 show a composition bias toward polar residues; it reads IDNKTMSNVNYNRFQPANRTVSSPNVRNFSVP. Composition is skewed to low complexity over residues 891–914, 952–1058, and 1065–1079; these read KPKNTTSSLSSSSSNISKSTNSTP, TSSP…TSST, and HSNSLSQTPSSSSSS.

It is found in the cytoplasm. Rho GTPase-activating protein involved in the signal transduction pathway. The protein is Rho GTPase-activating protein gacF (gacF) of Dictyostelium discoideum (Social amoeba).